The chain runs to 316 residues: Iron-sulfur cluster assembly SufBD family protein MJ0034 (316 aa).

It belongs to the iron-sulfur cluster assembly SufBD family.

In Methanocaldococcus jannaschii (strain ATCC 43067 / DSM 2661 / JAL-1 / JCM 10045 / NBRC 100440) (Methanococcus jannaschii), this protein is Iron-sulfur cluster assembly SufBD family protein MJ0034.